The chain runs to 185 residues: Large ribosomal subunit protein uL5 (185 aa).

This sequence belongs to the universal ribosomal protein uL5 family. In terms of assembly, part of the 50S ribosomal subunit; part of the 5S rRNA subcomplex. Contacts the 5S rRNA and the P site tRNA. Forms a bridge to the 30S subunit in the 70S ribosome. Both N-terminus methionine truncation and retention have been observed for this protein. In terms of processing, may be methylated twice, on undetermined residues.

In terms of biological role, this is one of the proteins that bind and probably mediate the attachment of the 5S RNA into the large ribosomal subunit, where it forms part of the central protuberance. In the 70S ribosome it contacts protein S13 of the 30S subunit (bridge B1b), connecting the 2 subunits; this bridge is implicated in subunit movement. Contacts the P site tRNA; the 5S rRNA and some of its associated proteins might help stabilize positioning of ribosome-bound tRNAs. The sequence is that of Large ribosomal subunit protein uL5 from Rhodopseudomonas palustris (strain ATCC BAA-98 / CGA009).